Reading from the N-terminus, the 1070-residue chain is DNA-directed RNA polymerase subunit beta (1070 aa).

The protein belongs to the RNA polymerase beta chain family. In terms of assembly, in plastids the minimal PEP RNA polymerase catalytic core is composed of four subunits: alpha, beta, beta', and beta''. When a (nuclear-encoded) sigma factor is associated with the core the holoenzyme is formed, which can initiate transcription.

It localises to the plastid. The protein localises to the chloroplast. The enzyme catalyses RNA(n) + a ribonucleoside 5'-triphosphate = RNA(n+1) + diphosphate. Its function is as follows. DNA-dependent RNA polymerase catalyzes the transcription of DNA into RNA using the four ribonucleoside triphosphates as substrates. The protein is DNA-directed RNA polymerase subunit beta of Daucus carota (Wild carrot).